The primary structure comprises 524 residues: GMP synthase [glutamine-hydrolyzing] (524 aa).

The region spanning 8 to 206 is the Glutamine amidotransferase type-1 domain; sequence KILILDFGSQ…VRKLCQCEAR (199 aa). Residue Cys85 is the Nucleophile of the active site. Active-site residues include His180 and Glu182. In terms of domain architecture, GMPS ATP-PPase spans 207–399; that stretch reads WTTGNIVEDA…LGLPYEMVYR (193 aa). 234 to 240 contributes to the ATP binding site; that stretch reads SGGVDSS.

As to quaternary structure, homodimer.

The catalysed reaction is XMP + L-glutamine + ATP + H2O = GMP + L-glutamate + AMP + diphosphate + 2 H(+). Its pathway is purine metabolism; GMP biosynthesis; GMP from XMP (L-Gln route): step 1/1. Catalyzes the synthesis of GMP from XMP. This Methylococcus capsulatus (strain ATCC 33009 / NCIMB 11132 / Bath) protein is GMP synthase [glutamine-hydrolyzing].